Reading from the N-terminus, the 320-residue chain is tRNA U34 carboxymethyltransferase (320 aa).

Carboxy-S-adenosyl-L-methionine contacts are provided by residues Lys89, Trp103, Lys108, Gly127, 177–178 (LE), Met193, Tyr197, and Arg312.

Belongs to the class I-like SAM-binding methyltransferase superfamily. CmoB family. As to quaternary structure, homotetramer.

It carries out the reaction carboxy-S-adenosyl-L-methionine + 5-hydroxyuridine(34) in tRNA = 5-carboxymethoxyuridine(34) in tRNA + S-adenosyl-L-homocysteine + H(+). Catalyzes carboxymethyl transfer from carboxy-S-adenosyl-L-methionine (Cx-SAM) to 5-hydroxyuridine (ho5U) to form 5-carboxymethoxyuridine (cmo5U) at position 34 in tRNAs. In Stutzerimonas stutzeri (strain A1501) (Pseudomonas stutzeri), this protein is tRNA U34 carboxymethyltransferase.